A 347-amino-acid polypeptide reads, in one-letter code: Ribosomal RNA small subunit methyltransferase C (347 aa).

Belongs to the methyltransferase superfamily. RsmC family. As to quaternary structure, monomer.

It is found in the cytoplasm. It carries out the reaction guanosine(1207) in 16S rRNA + S-adenosyl-L-methionine = N(2)-methylguanosine(1207) in 16S rRNA + S-adenosyl-L-homocysteine + H(+). Functionally, specifically methylates the guanine in position 1207 of 16S rRNA in the 30S particle. In Yersinia enterocolitica serotype O:8 / biotype 1B (strain NCTC 13174 / 8081), this protein is Ribosomal RNA small subunit methyltransferase C.